A 1280-amino-acid chain; its full sequence is MASSNPPPQPAIGAPLAPSAPGPSPEVEEDSGEAFEFDDSDEEEDTSSGLVVPGLAPERDTEPSLICFDTVPGSDLDPAAAPPQTEAPTVVSNGDAVGAAISGVRRSSWKRKSSRRIDRFTFPALEEDVIYDDVPCESPDAHQPGAERGLVYEDVHRAGAPRETEDLGWSSSEFESYSEDSGEETKPEAEPTKHRGSFQPKLSPDLTRLKERYVRTKRDILALRVGGRDMQELKLKCDCKMTQLMKAAKSGTRDGLEKTRMAVMRKVSFLHRKDVLGDSEEEDMGLLEVGVTDIKPPAPELGPMPDGLSPQQVVRRHILGSIVQSEGSYVESLKRILQDYRNPLMEMEPKALSARKCQVVFFRVKEILHCHSMFQIALSSRVAEWDSTEKIGDLFVASFSKSMVLDVYSDYVNNFTNAMSIIKKACLTKPAFLEFLKRRQVCSTDRVTLYGLMVKPVQRFPQFILLLQDMLKNTPRGHPDRLSLQLALTELETLAEKLNEQKRLADQVAEIQQLTKSVSDRSSLNKLLTSGQRQLLLCETLTETVYGDRGQLIKSKERRVFLLNDMLVCANINFKPSNHRGQLEISSLVPLGPKYVVKWNTALPQVQVVEVGQDGGTYDKDNLLIQHAGAKKATAAGQAQNKVYLGPPRLFQELQDLQKDLAVVEQITLLISTLHGTYQNLNMTVAQDWCLALQRLMRVKEEEIHSANKCRLRLLLPGKPDKSGRPISFMVVFITPNPLSKISWVNRLHLAKIGLREENQPGWLCPDEDKKSKAPFWCPILACCVPAFSSRTLSLQLGGLVHSPVNSPLLGFSAVSTSLPQGYLWVGGGQEGAGGQVEIFSLNRPSPRTVKSFPVAAPVLCIEYIPDPEEEAEGAEESRAATDPSVTVHPTVCLGLQDGSILLYGSVDTGTQCLATCKSPGPQPVLCLRHSPFYLLAGLQDGTLAAYPRTSGDIPWDLESPPMCITVGPGPIRTLLSLEDAAWASCGPRVTVLDAATLQTQQSFEAHQDEAVSVTHMVKAGSGVWMAFSSGSSIRLFHTETLEHLQEINIATRTTFLLPGQKHLCVTSLLICQGLLWVGTDQGVIVLLPVPRLEGIPKITGKGMVSLNGHCGPVAFLAVAMSILAPDILRSDQEEAEGPQAEEDKPDGQAHETVPGPDSHTARELTRKKGILLQYRLRSTAHLPGPLLSVREPAPADGSALEHSEEDGSIYEMADDPDVWVRSRPCARDAHRKEICSVAIISGGQGYRHFGGAPGGLSGRAAPCSETDSTLLIWQVPLAL.

Pro residues predominate over residues 1–10; it reads MASSNPPPQP. A disordered region spans residues 1–94; that stretch reads MASSNPPPQP…TEAPTVVSNG (94 aa). Residues 26–46 show a composition bias toward acidic residues; that stretch reads EVEEDSGEAFEFDDSDEEEDT. Residue serine 40 is modified to Phosphoserine. Low complexity predominate over residues 78–89; it reads PAAAPPQTEAPT. Residues tyrosine 131 and tyrosine 152 each carry the phosphotyrosine modification. Positions 161–202 are disordered; the sequence is PRETEDLGWSSSEFESYSEDSGEETKPEAEPTKHRGSFQPKL. The segment covering 183–193 has biased composition (basic and acidic residues); sequence EETKPEAEPTK. A Phosphoserine modification is found at serine 279. Residues 314–501 form the DH domain; it reads VRRHILGSIV…ETLAEKLNEQ (188 aa). 2 disordered regions span residues 1133 to 1163 and 1186 to 1207; these read QEEA…HTAR and PLLS…SEED.

Interacts with RHOA, RHOB and RHOC.

It is found in the cytoplasm. Acts as a guanine nucleotide exchange factor (GEF) for RHOA, RHOB and RHOC. The chain is Rho guanine nucleotide exchange factor 10-like protein (Arhgef10l) from Mus musculus (Mouse).